The primary structure comprises 93 residues: Small ribosomal subunit protein bS18 (93 aa).

It belongs to the bacterial ribosomal protein bS18 family. In terms of assembly, part of the 30S ribosomal subunit. Forms a tight heterodimer with protein bS6.

Binds as a heterodimer with protein bS6 to the central domain of the 16S rRNA, where it helps stabilize the platform of the 30S subunit. This is Small ribosomal subunit protein bS18 from Acidovorax ebreus (strain TPSY) (Diaphorobacter sp. (strain TPSY)).